The chain runs to 389 residues: Odorant receptor 85c (389 aa).

Residues 1–33 (MKFMKYAVFFYTSVGIEPYTIDSRSKKASLWSH) are Cytoplasmic-facing. A helical membrane pass occupies residues 34-54 (LLFWANVINLSVIVFGEILYL). The Extracellular portion of the chain corresponds to 55-66 (GVAYSDGKFIDA). The helical transmembrane segment at 67–87 (VTVLSYIGFVIVGMSKMFFIW) threads the bilayer. At 88 to 130 (WKKTDLSDLVKELEHIYPNGKAEEEMYRLDRYLRSCSRISITY) the chain is on the cytoplasmic side. A helical membrane pass occupies residues 131 to 151 (ALLYSVLIWTFNLFSIMQFLV). Residues 152 to 199 (YEKLLKIRVVGQTLPYLMYFPWNWHENWTYYVLLFCQNFAGHTSASGQ) lie on the Extracellular side of the membrane. The N-linked (GlcNAc...) asparagine glycan is linked to N178. The helical transmembrane segment at 200–220 (ISTDLLLCAVATQVVMHFDYL) threads the bilayer. At 221–259 (ARVVEKQVLDRDWSENSRFLAKTVQYHQRILRLMDVLND) the chain is on the cytoplasmic side. The helical transmembrane segment at 260–280 (IFGIPLLLNFMVSTFVICFVG) threads the bilayer. At 281 to 290 (FQMTVGVPPD) the chain is on the extracellular side. The helical transmembrane segment at 291–311 (IMIKLFLFLFSSLSQVYLICH) threads the bilayer. The Cytoplasmic segment spans residues 312–359 (YGQLIADASSSLSISAYKQNWQNADIRYRRALVFFIARPQRTTYLKAT). The helical transmembrane segment at 360–380 (IFMNITRATMTDLLQVSYKFF) threads the bilayer. Residues 381-389 (ALLRTMYIK) are Extracellular-facing.

Belongs to the insect chemoreceptor superfamily. Heteromeric odorant receptor channel (TC 1.A.69) family. Or49a subfamily. Interacts with Orco. Complexes exist early in the endomembrane system in olfactory sensory neurons (OSNs), coupling these complexes to the conserved ciliary trafficking pathway.

It is found in the cell membrane. Odorant receptor which mediates acceptance or avoidance behavior, depending on its substrates. The odorant receptor repertoire encodes a large collection of odor stimuli that vary widely in identity, intensity, and duration. May form a complex with Orco to form odorant-sensing units, providing sensitive and prolonged odorant signaling and calcium permeability. This chain is Odorant receptor 85c (Or85c), found in Drosophila melanogaster (Fruit fly).